Here is a 250-residue protein sequence, read N- to C-terminus: MAKLEICCFGAECALIAERSGADRIELCTSPSEGGVTPSYGILKQVIDLVRIPVHPIIRPRGGDFCYSQADFAAMKNDISMIRDMGFSGAVVGILNEEGHIDLPKMAILMELAGPLAITFHRAFDMCINPLLALDQLTQLGVARILTSGQQANAELGLPLLRTLNEKTQGPIIMAGAGVRLSNIQKFLDSGLQEIHSSAGKQAPSTMNYRKAGVTMSSDSEVDEFTHYCVDEDVVGAMKDIMSIYTTSVN.

This sequence belongs to the CutC family.

The protein resides in the cytoplasm. This chain is PF03932 family protein CutC, found in Proteus mirabilis (strain HI4320).